Consider the following 1393-residue polypeptide: Rab3 GTPase-activating protein non-catalytic subunit (1393 aa).

The segment at 36–67 (RDPSKSTDWEDDGWGAWEENEPQEPEEEGNTC) is disordered. Ser39 is subject to Phosphoserine. Acidic residues predominate over residues 44-64 (WEDDGWGAWEENEPQEPEEEG). A Phosphoserine modification is found at Ser450. Residue Thr901 is modified to Phosphothreonine. Residues Ser916 and Ser978 each carry the phosphoserine modification.

This sequence belongs to the Rab3-GAP regulatory subunit family. The Rab3 GTPase-activating complex is a heterodimer composed of RAB3GAP1 and RAB3GAP2. The Rab3 GTPase-activating complex interacts with DMXL2. Interacts with LMAN1. Ubiquitous.

It localises to the cytoplasm. The protein resides in the endoplasmic reticulum. Functionally, regulatory subunit of the Rab3 GTPase-activating (Rab3GAP) complex composed of RAB3GAP1 and RAB3GAP2, which has GTPase-activating protein (GAP) activity towards various Rab3 subfamily members (RAB3A, RAB3B, RAB3C and RAB3D), RAB5A and RAB43, and guanine nucleotide exchange factor (GEF) activity towards RAB18. As part of the Rab3GAP complex, acts as a GAP for Rab3 proteins by converting active RAB3-GTP to the inactive form RAB3-GDP. Rab3 proteins are involved in regulated exocytosis of neurotransmitters and hormones. The Rab3GAP complex acts as a GEF for RAB18 by promoting the conversion of inactive RAB18-GDP to the active form RAB18-GTP. Recruits and stabilizes RAB18 at the cis-Golgi membrane in human fibroblasts where RAB18 is most likely activated. Also involved in RAB18 recruitment at the endoplasmic reticulum (ER) membrane where it maintains proper ER structure. Required for normal eye and brain development. May participate in neurodevelopmental processes such as proliferation, migration and differentiation before synapse formation, and non-synaptic vesicular release of neurotransmitters. The protein is Rab3 GTPase-activating protein non-catalytic subunit of Homo sapiens (Human).